A 177-amino-acid chain; its full sequence is MAELATIARPYAEALFRVAKAADLNSWANLVSEMAQVAANPDVYALAHNPKVSDDLISSTFISALKSPVGAEAKNFINMLVQNDRLTLLPEIATQFHALKNAQEGAADAEIVSAFELSSAQLTELVATLEKKFGRKLNPTVTVDGALIGGVRVVVGDEVLDTSVRAKLQQMQVALTA.

This sequence belongs to the ATPase delta chain family. In terms of assembly, F-type ATPases have 2 components, F(1) - the catalytic core - and F(0) - the membrane proton channel. F(1) has five subunits: alpha(3), beta(3), gamma(1), delta(1), epsilon(1). F(0) has three main subunits: a(1), b(2) and c(10-14). The alpha and beta chains form an alternating ring which encloses part of the gamma chain. F(1) is attached to F(0) by a central stalk formed by the gamma and epsilon chains, while a peripheral stalk is formed by the delta and b chains.

The protein localises to the cell inner membrane. In terms of biological role, f(1)F(0) ATP synthase produces ATP from ADP in the presence of a proton or sodium gradient. F-type ATPases consist of two structural domains, F(1) containing the extramembraneous catalytic core and F(0) containing the membrane proton channel, linked together by a central stalk and a peripheral stalk. During catalysis, ATP synthesis in the catalytic domain of F(1) is coupled via a rotary mechanism of the central stalk subunits to proton translocation. Its function is as follows. This protein is part of the stalk that links CF(0) to CF(1). It either transmits conformational changes from CF(0) to CF(1) or is implicated in proton conduction. The sequence is that of ATP synthase subunit delta from Janthinobacterium sp. (strain Marseille) (Minibacterium massiliensis).